A 267-amino-acid polypeptide reads, in one-letter code: 2-keto-3-deoxy-L-rhamnonate aldolase (267 aa).

Histidine 49 functions as the Proton acceptor in the catalytic mechanism. Glutamine 151 contributes to the substrate binding site. Glutamate 153 provides a ligand contact to Mg(2+). Positions 178 and 179 each coordinate substrate. Aspartate 179 lines the Mg(2+) pocket.

The protein belongs to the HpcH/HpaI aldolase family. KDR aldolase subfamily. As to quaternary structure, homohexamer. Requires Mg(2+) as cofactor.

The catalysed reaction is 2-dehydro-3-deoxy-L-rhamnonate = (S)-lactaldehyde + pyruvate. In terms of biological role, catalyzes the reversible retro-aldol cleavage of 2-keto-3-deoxy-L-rhamnonate (KDR) to pyruvate and lactaldehyde. The sequence is that of 2-keto-3-deoxy-L-rhamnonate aldolase from Escherichia coli O157:H7.